The primary structure comprises 257 residues: Diaminopimelate epimerase (257 aa).

Substrate contacts are provided by Asn-6 and Asn-57. Catalysis depends on Cys-66, which acts as the Proton donor. Residues 67–68, Asn-170, and 188–189 each bind substrate; these read GN and ER. The active-site Proton acceptor is the Cys-198. A substrate-binding site is contributed by 199-200; sequence GT.

Belongs to the diaminopimelate epimerase family. Homodimer.

It is found in the cytoplasm. The catalysed reaction is (2S,6S)-2,6-diaminopimelate = meso-2,6-diaminopimelate. It participates in amino-acid biosynthesis; L-lysine biosynthesis via DAP pathway; DL-2,6-diaminopimelate from LL-2,6-diaminopimelate: step 1/1. Its function is as follows. Catalyzes the stereoinversion of LL-2,6-diaminopimelate (L,L-DAP) to meso-diaminopimelate (meso-DAP), a precursor of L-lysine and an essential component of the bacterial peptidoglycan. The polypeptide is Diaminopimelate epimerase (Chlorobaculum tepidum (strain ATCC 49652 / DSM 12025 / NBRC 103806 / TLS) (Chlorobium tepidum)).